The primary structure comprises 205 residues: MPIFFYLFATLITISSVCVVLSKNSVYSVLWLIFAFINGAGLMILLGAEFLAMMLIVIYVGAVAVLFLFVIMMLDMHFNKTITQLKANLALSIFIALIMFADLVIIILLGTKNINFNSNVSFTITNNISNTKAIGGVLYTDFMLPFQMAGLILFVAMIACITLTLKKREGVKRQDISKQLRHNKENTVLMTKPILNKGVENIKYE.

A run of 5 helical transmembrane segments spans residues methionine 1–leucine 21, valine 26–leucine 46, methionine 54–leucine 74, leucine 89–leucine 109, and phenylalanine 142–threonine 162.

Belongs to the complex I subunit 6 family.

The protein resides in the cell membrane. The enzyme catalyses a quinone + NADH + 5 H(+)(in) = a quinol + NAD(+) + 4 H(+)(out). Functionally, NDH-1 shuttles electrons from NADH, via FMN and iron-sulfur (Fe-S) centers, to quinones in the respiratory chain. Couples the redox reaction to proton translocation (for every two electrons transferred, four hydrogen ions are translocated across the cytoplasmic membrane), and thus conserves the redox energy in a proton gradient. The polypeptide is NADH-quinone oxidoreductase subunit J (nuoJ) (Rickettsia conorii (strain ATCC VR-613 / Malish 7)).